Here is a 287-residue protein sequence, read N- to C-terminus: Light-independent protochlorophyllide reductase iron-sulfur ATP-binding protein (287 aa).

ATP-binding positions include 10-15 and K39; that span reads GIGKST. S14 is a binding site for Mg(2+). Positions 95 and 129 each coordinate [4Fe-4S] cluster. 180–181 lines the ATP pocket; the sequence is NR.

The protein belongs to the NifH/BchL/ChlL family. As to quaternary structure, homodimer. Protochlorophyllide reductase is composed of three subunits; ChlL, ChlN and ChlB. Requires [4Fe-4S] cluster as cofactor.

Its subcellular location is the plastid. The protein resides in the chloroplast. The catalysed reaction is chlorophyllide a + oxidized 2[4Fe-4S]-[ferredoxin] + 2 ADP + 2 phosphate = protochlorophyllide a + reduced 2[4Fe-4S]-[ferredoxin] + 2 ATP + 2 H2O. Its pathway is porphyrin-containing compound metabolism; chlorophyll biosynthesis (light-independent). In terms of biological role, component of the dark-operative protochlorophyllide reductase (DPOR) that uses Mg-ATP and reduced ferredoxin to reduce ring D of protochlorophyllide (Pchlide) to form chlorophyllide a (Chlide). This reaction is light-independent. The L component serves as a unique electron donor to the NB-component of the complex, and binds Mg-ATP. In Nephroselmis olivacea (Green alga), this protein is Light-independent protochlorophyllide reductase iron-sulfur ATP-binding protein.